A 349-amino-acid polypeptide reads, in one-letter code: tRNA pseudouridine synthase D (349 aa).

The segment at 1–22 is disordered; sequence MTDAPLVTAELPGSGGSLRRSP. The active-site Nucleophile is the Asp78. The TRUD domain occupies 150 to 304; that stretch reads GLPNLFGPQR…AEGTRRAARL (155 aa).

Belongs to the pseudouridine synthase TruD family.

It catalyses the reaction uridine(13) in tRNA = pseudouridine(13) in tRNA. Responsible for synthesis of pseudouridine from uracil-13 in transfer RNAs. In Anaeromyxobacter sp. (strain Fw109-5), this protein is tRNA pseudouridine synthase D.